The following is a 422-amino-acid chain: MVSYRDRLSQLPDDFLLQILSWLPTKDVLVTSLLSKRWRFLWTLVPRLNYDLRLHDNTCPRFSQFVDRSLLLHKAPTLESLNIKIGSICFTAEKDVGVWVRIGVDRFVRELSVSYCSGEEPIRLPKCLFTCSTLAVLKLENITLEDASCYVCFQSLKTLHLLDVKYLDDQSLPRIISSCSSLEDLVVQRCPGDNVKVVTVTAPSLKTLSLHKSSQAFEGDDDGFLIDTPKLKRVDIEDYWGGFCYIENMPEVVEANVDVIYKNTEKLLGSITSVKRLALCLITSDAAYPAGTIFSQLVHLELCTCAPRWWDLLTRLIEDSPKLRVLKLRQKHIRRAPSPRASWKQPALPKCLLFHLETFKWELYEGSQKQKEVATFILKHAIRLKTAIISPKPTSTLLEKHEMLKDLSSSPRGSSTCELLFD.

Residues 5–54 (RDRLSQLPDDFLLQILSWLPTKDVLVTSLLSKRWRFLWTLVPRLNYDLRL) enclose the F-box domain. LRR repeat units follow at residues 59-85 (CPRF…NIKI), 136-163 (VLKL…HLLD), 164-189 (VKYL…VVQR), 193-212 (DNVK…SLHK), 214-238 (SQAF…DIED), 279-304 (LCLI…ELCT), and 305-330 (CAPR…KLRQ). Positions 342–391 (SWKQPALPKCLLFHLETFKWELYEGSQKQKEVATFILKHAIRLKTAIISP) constitute an FBD domain.

This is F-box/FBD/LRR-repeat protein At5g56420 from Arabidopsis thaliana (Mouse-ear cress).